The primary structure comprises 212 residues: Deoxyribose-phosphate aldolase (212 aa).

The active-site Proton donor/acceptor is aspartate 89. Lysine 151 acts as the Schiff-base intermediate with acetaldehyde in catalysis. Catalysis depends on lysine 180, which acts as the Proton donor/acceptor.

This sequence belongs to the DeoC/FbaB aldolase family. DeoC type 1 subfamily.

It is found in the cytoplasm. The enzyme catalyses 2-deoxy-D-ribose 5-phosphate = D-glyceraldehyde 3-phosphate + acetaldehyde. Its pathway is carbohydrate degradation; 2-deoxy-D-ribose 1-phosphate degradation; D-glyceraldehyde 3-phosphate and acetaldehyde from 2-deoxy-alpha-D-ribose 1-phosphate: step 2/2. Catalyzes a reversible aldol reaction between acetaldehyde and D-glyceraldehyde 3-phosphate to generate 2-deoxy-D-ribose 5-phosphate. The polypeptide is Deoxyribose-phosphate aldolase (Clostridium botulinum (strain Langeland / NCTC 10281 / Type F)).